Here is a 125-residue protein sequence, read N- to C-terminus: Glycine cleavage system H protein (125 aa).

In terms of domain architecture, Lipoyl-binding spans Glu19–Lys101. N6-lipoyllysine is present on Lys60.

Belongs to the GcvH family. The glycine cleavage system is composed of four proteins: P, T, L and H. It depends on (R)-lipoate as a cofactor.

The glycine cleavage system catalyzes the degradation of glycine. The H protein shuttles the methylamine group of glycine from the P protein to the T protein. This Legionella pneumophila (strain Corby) protein is Glycine cleavage system H protein.